The following is a 296-amino-acid chain: Nucleotide-binding protein stu0831 (296 aa).

13 to 20 (GMSGAGKT) lines the ATP pocket. 63-66 (DMRS) is a GTP binding site.

This sequence belongs to the RapZ-like family.

Displays ATPase and GTPase activities. This chain is Nucleotide-binding protein stu0831, found in Streptococcus thermophilus (strain ATCC BAA-250 / LMG 18311).